We begin with the raw amino-acid sequence, 584 residues long: Probable terpene synthase 9 (584 aa).

The Mg(2+) site is built by D339, D343, and E491. The short motif at 339–343 is the DDXXD motif element; sequence DDMYD.

It belongs to the terpene synthase family. Requires Mg(2+) as cofactor.

Its function is as follows. Probable sesquiterpene synthase. In Ricinus communis (Castor bean), this protein is Probable terpene synthase 9 (TPS9).